A 258-amino-acid polypeptide reads, in one-letter code: Maintenance of carboxysome distribution protein A (258 aa).

ATP-binding residues include G11, G12, Q13, G14, K15, T16, T17, Q40, E147, K151, F182, R183, L216, E217, S218, and Y221. Mg(2+) is bound at residue T16.

This sequence belongs to the ParA family. McdA subfamily. Homodimerizes in the presence of ATP, making extra nucleotide contacts than with ADP or AMP-PNP. Each subunit binds 1 ATP molecule; Glu-147, Lys-151 and Arg-183 cross the dimer interface to contact ATP in the other subunit, while Phe-182, Arg-183 and Tyr-221 stack with the adenine base in their own subunit. Forms a complex with McdB.

It is found in the cytoplasm. The protein resides in the nucleoid. The enzyme catalyses ATP + H2O = ADP + phosphate + H(+). In terms of biological role, mcdA and McdB together mediate carboxysome (Cb) spacing, size, ultrastructure and probably inheritance in the cell, together they prevent Cb aggregation. McdA is an ATPase that forms dynamic gradients on the nucleoid in response to adapter protein McdB, which associates with carboxysomes. The interplay between McdA gradients on the nucleoid and McdB-bound carboxysomes result in the equal spacing of Cbs along the cell length. Binds DNA saturably and strongly in the presence of Mg(2+)ATP; without ATP, DNA-binding is very poor (tested with a mutant that should not be able to hydrolyze ATP, Asp-38-Ala). Decreasing the NaCl concentration increases DNA binding. Its function is as follows. Incorrect positioning (aggregation) of carboxysomes results in reduced CO(2) fixation by encapsulated ribulose-1,5-bisphosphate carboxylase (RuBisCO, cbbL/cbbS), which leads to slower growth. In Gloeothece citriformis (strain PCC 7424) (Cyanothece sp. (strain PCC 7424)), this protein is Maintenance of carboxysome distribution protein A.